We begin with the raw amino-acid sequence, 375 residues long: 2-methylcitrate synthase (375 aa).

Lys-72 and His-187 together coordinate substrate. Residue His-222 is part of the active site. Residue 255 to 259 (KIMGF) participates in CoA binding. His-261 is an active-site residue. Substrate is bound at residue Arg-270. Asp-312 is a catalytic residue. Residues Arg-337 and Arg-356 each contribute to the substrate site.

Belongs to the citrate synthase family. Homodimer.

The catalysed reaction is propanoyl-CoA + oxaloacetate + H2O = (2S,3S)-2-methylcitrate + CoA + H(+). The enzyme catalyses oxaloacetate + acetyl-CoA + H2O = citrate + CoA + H(+). It participates in organic acid metabolism; propanoate degradation. Its pathway is carbohydrate metabolism; tricarboxylic acid cycle; isocitrate from oxaloacetate: step 1/2. Its function is as follows. Involved in the catabolism of short chain fatty acids (SCFA) via the tricarboxylic acid (TCA)(acetyl degradation route) and via the 2-methylcitrate cycle II (propionate degradation route). Catalyzes the Claisen condensation of propionyl-CoA and oxaloacetate (OAA) to yield 2-methylcitrate (2-MC) and CoA. Catalyzes the condensation of oxaloacetate with acetyl-CoA. This is 2-methylcitrate synthase (prpC) from Shewanella oneidensis (strain ATCC 700550 / JCM 31522 / CIP 106686 / LMG 19005 / NCIMB 14063 / MR-1).